Reading from the N-terminus, the 775-residue chain is Subtilisin-like protease SBT4.1 (775 aa).

A signal peptide spans 1 to 23 (MAIAFHTFLLQLLLFFFASFAEA). Asparagine 24 carries N-linked (GlcNAc...) asparagine glycosylation. Residues 24–106 (NDSRKTYLVQ…VSRSRNLKLQ (83 aa)) constitute a propeptide, activation peptide. Positions 29-105 (TYLVQMKVGG…EVSRSRNLKL (77 aa)) constitute an Inhibitor I9 domain. A Peptidase S8 domain is found at 110–606 (SWDFMNLTLK…SGHLNATKVR (497 aa)). N-linked (GlcNAc...) asparagine glycosylation is found at asparagine 115 and asparagine 126. Aspartate 136 functions as the Charge relay system in the catalytic mechanism. Asparagine 162 is a glycosylation site (N-linked (GlcNAc...) asparagine). The active-site Charge relay system is the histidine 196. Positions 365-459 (FYPLLNEKAP…FLDEQKKGKL (95 aa)) constitute a PA domain. Asparagine 437 carries an N-linked (GlcNAc...) asparagine glycan. Residue serine 551 is the Charge relay system of the active site. N-linked (GlcNAc...) asparagine glycosylation occurs at asparagine 601.

This sequence belongs to the peptidase S8 family. Post-translationally, the C-terminal propeptide is autocleaved.

It is found in the secreted. In Arabidopsis thaliana (Mouse-ear cress), this protein is Subtilisin-like protease SBT4.1.